A 254-amino-acid polypeptide reads, in one-letter code: MAQSGAKAADLSREPPGEQKPSPSSRQNEEDLGYNLYPERGSRLKKSTVEESLFTFKHKCQLMLQFAMDTSPYAKLLLGAMKSSGCTVFKDRHFSCEDCDGTVSGGFDAATSQIVLCQNNIHQQAHMNRVVTHELIHAFDHCRAQVDWFSNYRHLACSEIRAANLSGDCSFINEFSRFNFGLRKHHQECVRGRALRSILAVRRVSREEAERVVDEVFDSCFNDHAPFGRIPHSKKDAKFAHRDFENRDRYYANL.

The disordered stretch occupies residues 1-32 (MAQSGAKAADLSREPPGEQKPSPSSRQNEEDL). Residue His-133 coordinates a divalent metal cation. Residue Glu-134 is part of the active site. A divalent metal cation is bound at residue His-137.

Belongs to the peptidase M76 family.

This is Mitochondrial inner membrane protease ATP23 homolog (atp23) from Danio rerio (Zebrafish).